The sequence spans 97 residues: Aspartyl/glutamyl-tRNA(Asn/Gln) amidotransferase subunit C (97 aa).

Belongs to the GatC family. Heterotrimer of A, B and C subunits.

The enzyme catalyses L-glutamyl-tRNA(Gln) + L-glutamine + ATP + H2O = L-glutaminyl-tRNA(Gln) + L-glutamate + ADP + phosphate + H(+). It carries out the reaction L-aspartyl-tRNA(Asn) + L-glutamine + ATP + H2O = L-asparaginyl-tRNA(Asn) + L-glutamate + ADP + phosphate + 2 H(+). In terms of biological role, allows the formation of correctly charged Asn-tRNA(Asn) or Gln-tRNA(Gln) through the transamidation of misacylated Asp-tRNA(Asn) or Glu-tRNA(Gln) in organisms which lack either or both of asparaginyl-tRNA or glutaminyl-tRNA synthetases. The reaction takes place in the presence of glutamine and ATP through an activated phospho-Asp-tRNA(Asn) or phospho-Glu-tRNA(Gln). The chain is Aspartyl/glutamyl-tRNA(Asn/Gln) amidotransferase subunit C from Prochlorococcus marinus subsp. pastoris (strain CCMP1986 / NIES-2087 / MED4).